The sequence spans 199 residues: Peroxiredoxin 2 (199 aa).

The region spanning 8-166 is the Thioredoxin domain; it reads AFIGQPAPNF…TLRLIQAFQF (159 aa). Cys53 serves as the catalytic Cysteine sulfenic acid (-SOH) intermediate.

Belongs to the peroxiredoxin family. AhpC/Prx1 subfamily. Homodimer; disulfide-linked, upon oxidation.

It carries out the reaction a hydroperoxide + [thioredoxin]-dithiol = an alcohol + [thioredoxin]-disulfide + H2O. Its function is as follows. Thiol-specific peroxidase that catalyzes the reduction of hydrogen peroxide and organic hydroperoxides to water and alcohols, respectively. Plays a role in cell protection against oxidative stress by detoxifying peroxides and as sensor of hydrogen peroxide-mediated signaling events. In Brugia malayi (Filarial nematode worm), this protein is Peroxiredoxin 2 (tsa-2).